The sequence spans 227 residues: Orotate phosphoribosyltransferase 2 (227 aa).

41–42 (FF) contacts orotate. Residues 79-80 (YK), R109, K110, K113, H115, and 135-143 (DDVMTAGTA) contribute to the 5-phospho-alpha-D-ribose 1-diphosphate site. 2 residues coordinate orotate: T139 and R167.

This sequence belongs to the purine/pyrimidine phosphoribosyltransferase family. PyrE subfamily. Homodimer.

The enzyme catalyses orotidine 5'-phosphate + diphosphate = orotate + 5-phospho-alpha-D-ribose 1-diphosphate. The protein operates within pyrimidine metabolism; UMP biosynthesis via de novo pathway; UMP from orotate: step 1/2. Functionally, catalyzes the transfer of a ribosyl phosphate group from 5-phosphoribose 1-diphosphate to orotate, leading to the formation of orotidine monophosphate (OMP). This chain is Orotate phosphoribosyltransferase 2 (URA10), found in Saccharomyces cerevisiae (strain ATCC 204508 / S288c) (Baker's yeast).